Reading from the N-terminus, the 483-residue chain is Peroxisomal biogenesis factor 3 (483 aa).

Residues Met1 to Lys14 are Peroxisomal-facing. Residues Phe15 to Phe35 traverse the membrane as a helical segment. Over Ser36 to Leu483 the chain is Cytoplasmic. 2 disordered regions span residues Gly119–Thr149 and Asn230–Ile253. Polar residues predominate over residues Ser242 to Ile253.

The protein belongs to the peroxin-3 family.

The protein localises to the peroxisome membrane. Involved in peroxisome biosynthesis. The chain is Peroxisomal biogenesis factor 3 (PEX3) from Kluyveromyces lactis (strain ATCC 8585 / CBS 2359 / DSM 70799 / NBRC 1267 / NRRL Y-1140 / WM37) (Yeast).